We begin with the raw amino-acid sequence, 144 residues long: UPF0306 protein ESA_03544 (144 aa).

Belongs to the UPF0306 family.

The polypeptide is UPF0306 protein ESA_03544 (Cronobacter sakazakii (strain ATCC BAA-894) (Enterobacter sakazakii)).